The sequence spans 595 residues: Aspartate--tRNA ligase (595 aa).

E176 lines the L-aspartate pocket. Residues 200 to 203 (QIFK) form an aspartate region. R222 provides a ligand contact to L-aspartate. ATP contacts are provided by residues 222–224 (RDE) and Q231. H450 is an L-aspartate binding site. ATP is bound at residue E484. R491 is an L-aspartate binding site. 536–539 (GLDR) contributes to the ATP binding site.

Belongs to the class-II aminoacyl-tRNA synthetase family. Type 1 subfamily. In terms of assembly, homodimer.

It is found in the cytoplasm. The catalysed reaction is tRNA(Asp) + L-aspartate + ATP = L-aspartyl-tRNA(Asp) + AMP + diphosphate. In terms of biological role, catalyzes the attachment of L-aspartate to tRNA(Asp) in a two-step reaction: L-aspartate is first activated by ATP to form Asp-AMP and then transferred to the acceptor end of tRNA(Asp). The protein is Aspartate--tRNA ligase of Halalkalibacterium halodurans (strain ATCC BAA-125 / DSM 18197 / FERM 7344 / JCM 9153 / C-125) (Bacillus halodurans).